The primary structure comprises 438 residues: GTPase Obg (438 aa).

Positions 6 to 164 (AEFVDRVKIF…RWLELELKIL (159 aa)) constitute an Obg domain. Residues 165–335 (ADVGLVGYPN…LLDRVASIVR (171 aa)) enclose the OBG-type G domain. Residues 171–178 (GYPNVGKS), 196–200 (FTTLV), 217–220 (DIPG), 287–290 (NKID), and 316–318 (SAV) each bind GTP. Mg(2+) is bound by residues S178 and T198. Residues 358-438 (VWRKLPERFE…IGNFEFEYRE (81 aa)) enclose the OCT domain.

It belongs to the TRAFAC class OBG-HflX-like GTPase superfamily. OBG GTPase family. In terms of assembly, monomer. It depends on Mg(2+) as a cofactor.

The protein localises to the cytoplasm. Its function is as follows. An essential GTPase which binds GTP, GDP and possibly (p)ppGpp with moderate affinity, with high nucleotide exchange rates and a fairly low GTP hydrolysis rate. Plays a role in control of the cell cycle, stress response, ribosome biogenesis and in those bacteria that undergo differentiation, in morphogenesis control. The polypeptide is GTPase Obg (Thermotoga neapolitana (strain ATCC 49049 / DSM 4359 / NBRC 107923 / NS-E)).